The sequence spans 166 residues: Large ribosomal subunit protein uL10 (166 aa).

It belongs to the universal ribosomal protein uL10 family. As to quaternary structure, part of the ribosomal stalk of the 50S ribosomal subunit. The N-terminus interacts with L11 and the large rRNA to form the base of the stalk. The C-terminus forms an elongated spine to which L12 dimers bind in a sequential fashion forming a multimeric L10(L12)X complex.

Forms part of the ribosomal stalk, playing a central role in the interaction of the ribosome with GTP-bound translation factors. The sequence is that of Large ribosomal subunit protein uL10 from Streptococcus gordonii (strain Challis / ATCC 35105 / BCRC 15272 / CH1 / DL1 / V288).